The sequence spans 436 residues: 3-ketoacyl-CoA thiolase (436 aa).

Residue C99 is the Acyl-thioester intermediate of the active site. Active-site proton acceptor residues include H392 and C422.

Belongs to the thiolase-like superfamily. Thiolase family. Heterotetramer of two alpha chains (FadJ) and two beta chains (FadI).

The protein localises to the cytoplasm. It catalyses the reaction an acyl-CoA + acetyl-CoA = a 3-oxoacyl-CoA + CoA. It participates in lipid metabolism; fatty acid beta-oxidation. Its function is as follows. Catalyzes the final step of fatty acid oxidation in which acetyl-CoA is released and the CoA ester of a fatty acid two carbons shorter is formed. In Escherichia coli (strain SMS-3-5 / SECEC), this protein is 3-ketoacyl-CoA thiolase.